We begin with the raw amino-acid sequence, 293 residues long: Ribosomal protein L11 methyltransferase (293 aa).

4 residues coordinate S-adenosyl-L-methionine: Thr145, Gly166, Asp188, and Asn230.

The protein belongs to the methyltransferase superfamily. PrmA family.

Its subcellular location is the cytoplasm. The enzyme catalyses L-lysyl-[protein] + 3 S-adenosyl-L-methionine = N(6),N(6),N(6)-trimethyl-L-lysyl-[protein] + 3 S-adenosyl-L-homocysteine + 3 H(+). Its function is as follows. Methylates ribosomal protein L11. The sequence is that of Ribosomal protein L11 methyltransferase from Escherichia coli O139:H28 (strain E24377A / ETEC).